The primary structure comprises 327 residues: DNA-directed RNA polymerase subunit alpha (327 aa).

The interval 1–233 is alpha N-terminal domain (alpha-NTD); sequence MVREKVKVST…NLFIPFLHVE (233 aa). The segment at 265 to 327 is alpha C-terminal domain (alpha-CTD); the sequence is KELAFQYIFI…KKILDILEKK (63 aa).

This sequence belongs to the RNA polymerase alpha chain family. As to quaternary structure, in plastids the minimal PEP RNA polymerase catalytic core is composed of four subunits: alpha, beta, beta', and beta''. When a (nuclear-encoded) sigma factor is associated with the core the holoenzyme is formed, which can initiate transcription.

It is found in the plastid. Its subcellular location is the chloroplast. It carries out the reaction RNA(n) + a ribonucleoside 5'-triphosphate = RNA(n+1) + diphosphate. In terms of biological role, DNA-dependent RNA polymerase catalyzes the transcription of DNA into RNA using the four ribonucleoside triphosphates as substrates. The chain is DNA-directed RNA polymerase subunit alpha from Olimarabidopsis pumila (Dwarf rocket).